A 132-amino-acid chain; its full sequence is Transmembrane protein 170B (132 aa).

Topologically, residues Met-1 to Trp-37 are extracellular. Asn-12 is a glycosylation site (N-linked (GlcNAc...) asparagine). Residues Ile-38 to Phe-58 traverse the membrane as a helical segment. Over Val-59 to Arg-68 the chain is Cytoplasmic. A helical membrane pass occupies residues Val-69–Thr-89. Residues Ser-90 to Met-104 lie on the Extracellular side of the membrane. A helical transmembrane segment spans residues Ala-105–Phe-125. Topologically, residues Ser-126 to Leu-132 are cytoplasmic.

It belongs to the TMEM170 family. As to quaternary structure, interacts with CTNNB1. In terms of tissue distribution, expressed in normal breast tissues. Down-regulated in breast cancer cells (at protein level).

The protein localises to the cell membrane. In terms of biological role, negatively regulates the canonical Wnt signaling in breast cancer cells. Exerts an inhibitory effect on breast cancer growth by inhibiting CTNNB1 stabilization and nucleus translocation, which reduces the activity of Wnt targets. The protein is Transmembrane protein 170B (TMEM170B) of Homo sapiens (Human).